Reading from the N-terminus, the 267-residue chain is Shikimate dehydrogenase (NADP(+)) (267 aa).

Residues 14-16 (SLS) and T61 each bind shikimate. K65 functions as the Proton acceptor in the catalytic mechanism. Shikimate is bound by residues N86 and D101. NADP(+) contacts are provided by residues 126-130 (GAGGA), 150-155 (NRTPFK), and L213. Residue Y215 coordinates shikimate. G236 serves as a coordination point for NADP(+).

The protein belongs to the shikimate dehydrogenase family. In terms of assembly, homodimer.

The enzyme catalyses shikimate + NADP(+) = 3-dehydroshikimate + NADPH + H(+). The protein operates within metabolic intermediate biosynthesis; chorismate biosynthesis; chorismate from D-erythrose 4-phosphate and phosphoenolpyruvate: step 4/7. Functionally, involved in the biosynthesis of the chorismate, which leads to the biosynthesis of aromatic amino acids. Catalyzes the reversible NADPH linked reduction of 3-dehydroshikimate (DHSA) to yield shikimate (SA). The protein is Shikimate dehydrogenase (NADP(+)) of Ruthia magnifica subsp. Calyptogena magnifica.